The primary structure comprises 265 residues: 3-methyl-2-oxobutanoate hydroxymethyltransferase (265 aa).

Residues D45 and D84 each coordinate Mg(2+). Residues 45 to 46 (DS), D84, and K112 each bind 3-methyl-2-oxobutanoate. E114 serves as a coordination point for Mg(2+). E181 serves as the catalytic Proton acceptor.

The protein belongs to the PanB family. Homodecamer; pentamer of dimers. Mg(2+) serves as cofactor.

Its subcellular location is the cytoplasm. It catalyses the reaction 3-methyl-2-oxobutanoate + (6R)-5,10-methylene-5,6,7,8-tetrahydrofolate + H2O = 2-dehydropantoate + (6S)-5,6,7,8-tetrahydrofolate. Its pathway is cofactor biosynthesis; (R)-pantothenate biosynthesis; (R)-pantoate from 3-methyl-2-oxobutanoate: step 1/2. In terms of biological role, catalyzes the reversible reaction in which hydroxymethyl group from 5,10-methylenetetrahydrofolate is transferred onto alpha-ketoisovalerate to form ketopantoate. The polypeptide is 3-methyl-2-oxobutanoate hydroxymethyltransferase (Pseudoalteromonas atlantica (strain T6c / ATCC BAA-1087)).